The chain runs to 313 residues: 3-O-acetylpapaveroxine carboxylesterase CXE2 (313 aa).

The Involved in the stabilization of the negatively charged intermediate by the formation of the oxyanion hole motif lies at 72–74 (HGG). Active-site residues include Ser158, Asp262, and His292.

Belongs to the 'GDXG' lipolytic enzyme family.

It carries out the reaction 3-O-acetylpapaveroxine + H2O = narcotine hemiacetal + acetate + H(+). It functions in the pathway alkaloid biosynthesis. In terms of biological role, carboxylesterase involved in the biosynthesis of the benzylisoquinoline alkaloid noscapine. Converts 3-O-acetylpapaveroxine to narcotine hemiacetal. This is 3-O-acetylpapaveroxine carboxylesterase CXE2 from Papaver somniferum (Opium poppy).